The following is a 467-amino-acid chain: Uronate isomerase (467 aa).

This sequence belongs to the metallo-dependent hydrolases superfamily. Uronate isomerase family.

The enzyme catalyses D-glucuronate = D-fructuronate. It carries out the reaction aldehydo-D-galacturonate = keto-D-tagaturonate. Its pathway is carbohydrate metabolism; pentose and glucuronate interconversion. The sequence is that of Uronate isomerase from Geobacillus thermodenitrificans (strain NG80-2).